The following is an 89-amino-acid chain: Small ribosomal subunit protein uS15 (89 aa).

The protein belongs to the universal ribosomal protein uS15 family. As to quaternary structure, part of the 30S ribosomal subunit. Forms a bridge to the 50S subunit in the 70S ribosome, contacting the 23S rRNA.

One of the primary rRNA binding proteins, it binds directly to 16S rRNA where it helps nucleate assembly of the platform of the 30S subunit by binding and bridging several RNA helices of the 16S rRNA. Functionally, forms an intersubunit bridge (bridge B4) with the 23S rRNA of the 50S subunit in the ribosome. This is Small ribosomal subunit protein uS15 from Shewanella putrefaciens (strain CN-32 / ATCC BAA-453).